The chain runs to 379 residues: MSDFLPFSRPAMGAEELAAVKTVLDSGWITTGPKNQELEAAFCRLTGNQYAVAVSSATAGMHIALMALGIGEGDEVITPSMTWVSTLNMIVLLGANPVMVDVDRDTLMVTPEHIEAAITPQTKAIIPVHYAGAPADLDAIYALGERYGIPVIEDAAHATGTSYKGLHIGARGTAIFSFHAIKNITCAEGGIVVTDNPQFADKLRSLKFHGLGVDAWDRQSGGRAPQAEVLAPGYKYNLPDLNAAIALAQLQKLDALNARRAAIAAQYHQAMADLPFQPLSLPSWEHIHAWHLFIIRVDEARCGITRDALMASLKTKGIGTGLHFRAAHTQKYYRERFPTLTLPDTEWNSERICSLPLFPDMTESDFDRVITALHQIAGQ.

Residue Lys-182 is modified to N6-(pyridoxal phosphate)lysine.

Belongs to the DegT/DnrJ/EryC1 family. ArnB subfamily. In terms of assembly, homodimer. The cofactor is pyridoxal 5'-phosphate.

It carries out the reaction UDP-4-amino-4-deoxy-beta-L-arabinose + 2-oxoglutarate = UDP-beta-L-threo-pentopyranos-4-ulose + L-glutamate. Its pathway is nucleotide-sugar biosynthesis; UDP-4-deoxy-4-formamido-beta-L-arabinose biosynthesis; UDP-4-deoxy-4-formamido-beta-L-arabinose from UDP-alpha-D-glucuronate: step 2/3. The protein operates within bacterial outer membrane biogenesis; lipopolysaccharide biosynthesis. Catalyzes the conversion of UDP-4-keto-arabinose (UDP-Ara4O) to UDP-4-amino-4-deoxy-L-arabinose (UDP-L-Ara4N). The modified arabinose is attached to lipid A and is required for resistance to polymyxin and cationic antimicrobial peptides. The polypeptide is UDP-4-amino-4-deoxy-L-arabinose--oxoglutarate aminotransferase (Salmonella choleraesuis (strain SC-B67)).